A 513-amino-acid chain; its full sequence is Light-independent protochlorophyllide reductase subunit B (513 aa).

Aspartate 36 contacts [4Fe-4S] cluster. Residue aspartate 299 is the Proton donor of the active site. Glycine 434–methionine 435 contributes to the substrate binding site.

The protein belongs to the ChlB/BchB/BchZ family. As to quaternary structure, protochlorophyllide reductase is composed of three subunits; ChlL, ChlN and ChlB. Forms a heterotetramer of two ChlB and two ChlN subunits. The cofactor is [4Fe-4S] cluster.

The protein resides in the plastid. It localises to the chloroplast. The catalysed reaction is chlorophyllide a + oxidized 2[4Fe-4S]-[ferredoxin] + 2 ADP + 2 phosphate = protochlorophyllide a + reduced 2[4Fe-4S]-[ferredoxin] + 2 ATP + 2 H2O. Its pathway is porphyrin-containing compound metabolism; chlorophyll biosynthesis (light-independent). Component of the dark-operative protochlorophyllide reductase (DPOR) that uses Mg-ATP and reduced ferredoxin to reduce ring D of protochlorophyllide (Pchlide) to form chlorophyllide a (Chlide). This reaction is light-independent. The NB-protein (ChlN-ChlB) is the catalytic component of the complex. This Zygnema circumcarinatum (Green alga) protein is Light-independent protochlorophyllide reductase subunit B.